Consider the following 126-residue polypeptide: Holo-[acyl-carrier-protein] synthase (126 aa).

Mg(2+)-binding residues include Asp8 and Glu57.

The protein belongs to the P-Pant transferase superfamily. AcpS family. Requires Mg(2+) as cofactor.

The protein localises to the cytoplasm. It carries out the reaction apo-[ACP] + CoA = holo-[ACP] + adenosine 3',5'-bisphosphate + H(+). Transfers the 4'-phosphopantetheine moiety from coenzyme A to a Ser of acyl-carrier-protein. The chain is Holo-[acyl-carrier-protein] synthase from Leptospira interrogans serogroup Icterohaemorrhagiae serovar copenhageni (strain Fiocruz L1-130).